Reading from the N-terminus, the 149-residue chain is Low molecular weight protein-tyrosine-phosphatase Wzb (149 aa).

Cys9 acts as the Nucleophile in catalysis. Residue Arg15 is part of the active site. The Proton donor role is filled by Asp115.

This sequence belongs to the low molecular weight phosphotyrosine protein phosphatase family.

It carries out the reaction O-phospho-L-tyrosyl-[protein] + H2O = L-tyrosyl-[protein] + phosphate. The protein operates within glycan metabolism; exopolysaccharide biosynthesis. In terms of biological role, dephosphorylates Wzc. Required for the extracellular polysaccharide colanic acid synthesis. Probably involved in the export of colanic acid from the cell to medium. Involved in protection of cells against contact-dependent growth inhibition (CDI). This Salmonella typhimurium (strain LT2 / SGSC1412 / ATCC 700720) protein is Low molecular weight protein-tyrosine-phosphatase Wzb (wzb).